The sequence spans 626 residues: Miltiradiene synthase KSL1, chloroplastic (626 aa).

Residues 1–51 constitute a chloroplast transit peptide; that stretch reads MSLAFNLRVIPFSGHTIQSRRGLFPVHESPMITTKPFAAVKCSLTTSTDLM. Residues Asp-329, Asp-333, Asn-473, and Glu-481 each coordinate Mg(2+). Positions 329–333 match the DDXXD motif motif; the sequence is DDFFD.

It belongs to the terpene synthase family. Mg(2+) is required as a cofactor. As to expression, highly expressed in roots, and, at low levels, in stems and leaves.

The protein localises to the plastid. It is found in the chloroplast. The catalysed reaction is (+)-copalyl diphosphate = miltiradiene + diphosphate. It participates in secondary metabolite biosynthesis; terpenoid biosynthesis. Its function is as follows. Involved in the biosynthesis of ent-kaurene diterpenoids natural products such as oridonin, miltiradiene, eriocalyxin B and nezukol, known to exhibit antitumor, anti-inflammatory and antibacterial activities. Catalyzes the conversion of (+)-copalyl diphosphate ((+)-CPP) to miltiradiene. This chain is Miltiradiene synthase KSL1, chloroplastic, found in Isodon rubescens (Rabdosia rubescens).